Here is a 210-residue protein sequence, read N- to C-terminus: Uracil phosphoribosyltransferase (210 aa).

Residues Arg78, Arg103, and 130-138 (DPMLATGGS) contribute to the 5-phospho-alpha-D-ribose 1-diphosphate site. Uracil is bound by residues Ile193 and 198 to 200 (GDA). Asp199 is a binding site for 5-phospho-alpha-D-ribose 1-diphosphate.

Belongs to the UPRTase family. Requires Mg(2+) as cofactor.

It carries out the reaction UMP + diphosphate = 5-phospho-alpha-D-ribose 1-diphosphate + uracil. The protein operates within pyrimidine metabolism; UMP biosynthesis via salvage pathway; UMP from uracil: step 1/1. Allosterically activated by GTP. In terms of biological role, catalyzes the conversion of uracil and 5-phospho-alpha-D-ribose 1-diphosphate (PRPP) to UMP and diphosphate. This is Uracil phosphoribosyltransferase from Chromobacterium violaceum (strain ATCC 12472 / DSM 30191 / JCM 1249 / CCUG 213 / NBRC 12614 / NCIMB 9131 / NCTC 9757 / MK).